Consider the following 160-residue polypeptide: Cytosolic iron-sulfur assembly component 2A (160 aa).

Residues His89, His123, Glu150, and Glu153 each coordinate Zn(2+).

It belongs to the MIP18 family. As to quaternary structure, monomer and homodimer. Component of the CIA complex. Interacts with CIAO1. Interacts with IREB2. Interacts with APAF1.

Its subcellular location is the cytoplasm. In terms of biological role, component of the cytosolic iron-sulfur protein assembly (CIA) complex, a multiprotein complex that mediates the incorporation of iron-sulfur cluster into extramitochondrial Fe/S proteins. As a CIA complex component and in collaboration with CIAO1 specifically matures ACO1 and stabilizes IREB2, connecting cytosolic iron-sulfur protein maturation with cellular iron regulation. May play a role in chromosome segregation through establishment of sister chromatid cohesion. May induce apoptosis in collaboration with APAF1. The polypeptide is Cytosolic iron-sulfur assembly component 2A (Bos taurus (Bovine)).